Consider the following 66-residue polypeptide: MPKMKTHRGAAKRVKRTASGQLKRSRAFTSHLFANKSTKQKRQLRKARLVSKSDMKRVKQLLAYKK.

Basic residues-rich tracts occupy residues 1-16 and 38-49; these read MPKMKTHRGAAKRVKR and TKQKRQLRKARL. Positions 1–49 are disordered; the sequence is MPKMKTHRGAAKRVKRTASGQLKRSRAFTSHLFANKSTKQKRQLRKARL.

It belongs to the bacterial ribosomal protein bL35 family.

This Staphylococcus aureus (strain MSSA476) protein is Large ribosomal subunit protein bL35.